A 101-amino-acid polypeptide reads, in one-letter code: A-type ATP synthase subunit F (101 aa).

The protein belongs to the V-ATPase F subunit family. Has multiple subunits, A(3), B(3), C, D, E, F, G, I and K(x); there may be a few other subunits as well.

It is found in the cell membrane. Functionally, component of the A-type ATP synthase that produces ATP from ADP in the presence of a proton gradient across the membrane. This Methanosarcina mazei (strain ATCC BAA-159 / DSM 3647 / Goe1 / Go1 / JCM 11833 / OCM 88) (Methanosarcina frisia) protein is A-type ATP synthase subunit F.